We begin with the raw amino-acid sequence, 149 residues long: DnaJ homolog subfamily C member 24 (149 aa).

A J domain is found at 11–82; that stretch reads DWYSILGADP…ETKKEYDLQR (72 aa). The DPH-type MB domain occupies 93 to 148; sequence VDARIYLEEMSWNEDDHSFSLSCRCGGKYSVSKDEAEEVTLISCDTCSLIIELLHY. Zn(2+) contacts are provided by Cys-115, Cys-117, Cys-136, and Cys-139.

The protein belongs to the DPH4 family. As to quaternary structure, monomer and homooligomer. Iron binding promotes oligomerization.

It localises to the cytoplasm. The protein resides in the cytoskeleton. It participates in protein modification; peptidyl-diphthamide biosynthesis. In terms of biological role, stimulates the ATPase activity of several Hsp70-type chaperones. This ability is enhanced by iron-binding. The iron-bound form is redox-active and can function as electron carrier. Plays a role in the diphthamide biosynthesis, a post-translational modification of histidine which occurs in translation elongation factor 2 (EEF2). The polypeptide is DnaJ homolog subfamily C member 24 (DNAJC24) (Bos taurus (Bovine)).